Reading from the N-terminus, the 1179-residue chain is Integrin alpha-1 (1179 aa).

The N-terminal stretch at 1–28 (MVPRRPASLEVTVACIWLLTVILGVCIS) is a signal peptide. Over 29–1141 (FNVDVKNSMS…SKDGLPGRVP (1113 aa)) the chain is Extracellular. One copy of the FG-GAP 1 repeat lies at 30–91 (NVDVKNSMSF…CPVGRERSMP (62 aa)). Cysteine 82 and cysteine 92 are joined by a disulfide. 9 N-linked (GlcNAc...) asparagine glycosylation sites follow: asparagine 100, asparagine 105, asparagine 112, asparagine 217, asparagine 317, asparagine 341, asparagine 402, asparagine 418, and asparagine 459. One copy of the FG-GAP 2 repeat lies at 101-160 (TSIPNVTEIKENMTFGSTLVTNPKGGFLACGPLYAYRCGHLHYTTGICSDVSPTFQVVNS). One can recognise a VWFA domain in the interval 175 to 364 (IVLDGSNSIY…LGERIFALEA (190 aa)). Residues 365-417 (TADQSAASFEMEMSQTGFSAHYSQDWVMLGAVGAYDWNGTVVMQKANQIVIPH) form an FG-GAP 3 repeat. FG-GAP repeat units follow at residues 422–474 (QTEP…DGDV), 475–537 (NILQ…RFEY), 556–614 (SCTK…TIRK), and 618–678 (QRIP…FEPN). 4 residues coordinate Ca(2+): aspartate 497, aspartate 499, aspartate 501, and aspartate 505. N-linked (GlcNAc...) asparagine glycosylation is present at asparagine 531. Aspartate 579, asparagine 581, aspartate 583, aspartate 587, aspartate 641, asparagine 643, aspartate 645, and aspartate 649 together coordinate Ca(2+). A disulfide bridge connects residues cysteine 687 and cysteine 696. 3 N-linked (GlcNAc...) asparagine glycosylation sites follow: asparagine 698, asparagine 747, and asparagine 779. A disulfide bridge links cysteine 702 with cysteine 755. An intrachain disulfide couples cysteine 807 to cysteine 813. N-linked (GlcNAc...) asparagine glycosylation is found at asparagine 839, asparagine 882, asparagine 907, asparagine 938, asparagine 965, asparagine 973, and asparagine 1007. An intrachain disulfide couples cysteine 877 to cysteine 885. Intrachain disulfides connect cysteine 1029-cysteine 1062 and cysteine 1065-cysteine 1072. N-linked (GlcNAc...) asparagine glycosylation is found at asparagine 1083, asparagine 1102, and asparagine 1113. Residues 1142-1164 (LWVILLSAFAGLLLLMLLILALW) form a helical membrane-spanning segment. Residues 1165-1179 (KIGFFKRPLKKKMEK) lie on the Cytoplasmic side of the membrane. The short motif at 1167-1171 (GFFKR) is the GFFKR motif element.

The protein belongs to the integrin alpha chain family. Heterodimer of an alpha and a beta subunit. Alpha-1 associates with beta-1. Interacts with RAB21. Interacts (via cytoplasmic domain) with PTPN2; activates PTPN2 phosphatase activity towards EGFR and negatively regulates EGF signaling.

Its subcellular location is the membrane. Integrin alpha-1/beta-1 is a receptor for laminin and collagen. It recognizes the proline-hydroxylated sequence G-F-P-G-E-R in collagen. Involved in anchorage-dependent, negative regulation of EGF-stimulated cell growth. The protein is Integrin alpha-1 (Itga1) of Mus musculus (Mouse).